The chain runs to 779 residues: Vezatin (779 aa).

2 helical membrane passes run 139-159 and 162-182; these read LATP…LLVM and TWWI…YLVI. Positions 430 to 462 form a coiled coil; the sequence is VRSLQLHLKALLNEVIILEDELEKLVCTKETQE. Disordered stretches follow at residues 618–719 and 757–779; these read PVDP…DSLQ and EQTF…IEEK. A compositionally biased stretch (polar residues) spans 625 to 634; it reads ISNSEPSMNS. A compositionally biased stretch (basic and acidic residues) spans 638–649; that stretch reads KVSKNDTEEESN. Polar residues predominate over residues 706–719; it reads GLTTAPPTPRDSLQ. Residues 770–779 show a composition bias toward basic and acidic residues; that stretch reads EENKNEIEEK.

This sequence belongs to the vezatin family. In terms of assembly, interacts with USH2A (via the cytoplasmic region); the interaction associates VEZT with the USH2 complex at the stereocilia base. Interacts with myosin MYO7A and the cadherin-catenins complex.

It localises to the cell membrane. The protein localises to the cell projection. The protein resides in the stereocilium membrane. It is found in the cell junction. Its subcellular location is the adherens junction. It localises to the nucleus. The protein localises to the cytoplasmic vesicle. The protein resides in the secretory vesicle. It is found in the acrosome. Plays a pivotal role in the establishment of adherens junctions and their maintenance in adult life. Required for morphogenesis of the preimplantation embryo, and for the implantation process. Functionally, (Microbial infection) In case of Listeria infection, promotes bacterial internalization by participating in myosin VIIa recruitment to the entry site. The chain is Vezatin (VEZT) from Homo sapiens (Human).